The sequence spans 166 residues: MAQTNSFFMLISSLMFLSLSQGQESQTELPNPRISCPEGTNAYRSYCYYFNEDPETWVDADLYCQNMNSGNLVSVLTQAEGAFVASLIKESSTDDSNVWIGLHDPKKNRRWHWSSGSLVSYKSWDTGSPSSANAGYCASLTSCSGFKKWKDESCEKKFSFVCKFKN.

A signal peptide spans 1–22 (MAQTNSFFMLISSLMFLSLSQG). Thr27 is a glycosylation site (O-linked (GalNAc...) threonine). Residues 34 to 164 (ISCPEGTNAY…EKKFSFVCKF (131 aa)) enclose the C-type lectin domain. 3 disulfides stabilise this stretch: Cys36/Cys47, Cys64/Cys162, and Cys137/Cys154.

All O-linked glycans consist of Gal-GlcNAc-Gal-GalNAc tetrasaccharide core and get elongated (microheterogeneity).

The protein localises to the secreted. Its function is as follows. Might act as an inhibitor of spontaneous calcium carbonate precipitation. May be associated with neuronal sprouting in brain, and with brain and pancreas regeneration. This chain is Lithostathine-1-beta (REG1B), found in Homo sapiens (Human).